The chain runs to 137 residues: Envelope glycoprotein L (137 aa).

An N-terminal signal peptide occupies residues 1–25 (MRAVGVFLATCLVTIFVLPTWGNWA). Positions 23-128 (NWAYPCCHVT…SVEDLFGANL (106 aa)) are interaction with gH. 2 disulfide bridges follow: Cys-28–Cys-56 and Cys-29–Cys-79.

Belongs to the herpesviridae glycoprotein L family. In terms of assembly, interacts with glycoprotein H (gH); this interaction is necessary for the correct processing and cell surface expression of gH. The heterodimer gH/gL seems to interact with gB trimers during fusion. The heterodimer gH/gL interacts with host EPHA2 to facilitate virus internalization and fusion.

It localises to the virion membrane. It is found in the host cell membrane. Its subcellular location is the host Golgi apparatus. The protein localises to the host trans-Golgi network. Its function is as follows. The heterodimer glycoprotein H-glycoprotein L is required for the fusion of viral and plasma membranes leading to virus entry into the host cell. Acts as a functional inhibitor of gH and maintains gH in an inhibited form. Upon binding to host integrins, gL dissociates from gH leading to activation of the viral fusion glycoproteins gB and gH. The heterodimer gH/gL targets also host EPHA2 to promote viral entry. This chain is Envelope glycoprotein L, found in Homo sapiens (Human).